A 398-amino-acid chain; its full sequence is Acetate kinase (398 aa).

N7 contacts Mg(2+). Position 14 (K14) interacts with ATP. R91 contributes to the substrate binding site. Catalysis depends on D148, which acts as the Proton donor/acceptor. Residues 208–212, 282–284, and 330–334 contribute to the ATP site; these read HLGNG, DFR, and GVGEN. Residue E383 participates in Mg(2+) binding.

Belongs to the acetokinase family. In terms of assembly, homodimer. Requires Mg(2+) as cofactor. The cofactor is Mn(2+).

The protein resides in the cytoplasm. The catalysed reaction is acetate + ATP = acetyl phosphate + ADP. The protein operates within metabolic intermediate biosynthesis; acetyl-CoA biosynthesis; acetyl-CoA from acetate: step 1/2. Functionally, catalyzes the formation of acetyl phosphate from acetate and ATP. Can also catalyze the reverse reaction. In Carboxydothermus hydrogenoformans (strain ATCC BAA-161 / DSM 6008 / Z-2901), this protein is Acetate kinase.